We begin with the raw amino-acid sequence, 318 residues long: Trans-prenyltransferase (318 aa).

A helical transmembrane segment spans residues 1 to 21 (MLHLIYISIIVVLIIILISYT). Positions 85, 88, and 122 each coordinate isopentenyl diphosphate. Mg(2+)-binding residues include D129 and D135. Position 140 (R140) interacts with dimethylallyl diphosphate. R141 contributes to the isopentenyl diphosphate binding site. The dimethylallyl diphosphate site is built by K216, T217, and Q254.

This sequence belongs to the FPP/GGPP synthase family. Asfivirus trans-prenyltransferase subfamily. It depends on Mg(2+) as a cofactor.

It is found in the host endoplasmic reticulum. It localises to the host membrane. The catalysed reaction is isopentenyl diphosphate + dimethylallyl diphosphate = (2E)-geranyl diphosphate + diphosphate. It carries out the reaction isopentenyl diphosphate + (2E)-geranyl diphosphate = (2E,6E)-farnesyl diphosphate + diphosphate. The enzyme catalyses isopentenyl diphosphate + (2E,6E)-farnesyl diphosphate = (2E,6E,10E)-geranylgeranyl diphosphate + diphosphate. It catalyses the reaction isopentenyl diphosphate + (2E,6E,10E)-geranylgeranyl diphosphate = (2E,6E,10E,14E)-geranylfarnesyl diphosphate + diphosphate. It functions in the pathway isoprenoid biosynthesis; farnesyl diphosphate biosynthesis; farnesyl diphosphate from geranyl diphosphate and isopentenyl diphosphate: step 1/1. The protein operates within isoprenoid biosynthesis; geranyl diphosphate biosynthesis; geranyl diphosphate from dimethylallyl diphosphate and isopentenyl diphosphate: step 1/1. Its pathway is isoprenoid biosynthesis; geranylgeranyl diphosphate biosynthesis; geranylgeranyl diphosphate from farnesyl diphosphate and isopentenyl diphosphate: step 1/1. In terms of biological role, trans-prenyltransferase that catalyzes the sequential condensation of isopentenyl diphosphate (IPP) with different allylic diphosphates, such as dimethylallyl diphosphate (DMAPP), geranyl diphosphate (GPP), farnesyl diphosphate (FPP) and geranylgeranyl diphosphate (GGPP), farnesyl diphosphate being the best allylic substrate. The protein is Trans-prenyltransferase of Ornithodoros (relapsing fever ticks).